Consider the following 416-residue polypeptide: Nuclear hormone receptor family member nhr-59 (416 aa).

The segment at residues 17–94 (QTFCQVCGQE…IGMDIQNFQF (78 aa)) is a DNA-binding region (nuclear receptor). 2 NR C4-type zinc fingers span residues 20 to 40 (CQVC…CRAC) and 57 to 82 (CKDG…LKKC). The region spanning 162–415 (TRLQKLSSSL…FSHPELVKDV (254 aa)) is the NR LBD domain.

Belongs to the nuclear hormone receptor family.

The protein localises to the nucleus. Functionally, orphan nuclear receptor. The polypeptide is Nuclear hormone receptor family member nhr-59 (Caenorhabditis elegans).